We begin with the raw amino-acid sequence, 435 residues long: Probable long-chain-alcohol O-fatty-acyltransferase 11 (435 aa).

The next 11 helical transmembrane spans lie at 7–27 (NLIK…YVPT), 36–56 (FLSV…FASV), 59–79 (SGYT…LFSF), 120–140 (PIEV…SVVL), 149–169 (IYPI…LEIL), 200–220 (DFWG…DVYA), 238–258 (LGVF…FFYI), 263–283 (PTGE…AYDA), 300–320 (CLIL…WLFF), 363–383 (FFTG…IGFV), and 406–426 (FFIG…IGFV).

This sequence belongs to the wax synthase family.

Its subcellular location is the membrane. It catalyses the reaction a long chain fatty alcohol + a fatty acyl-CoA = a wax ester + CoA. Its function is as follows. Catalyzes the final step in the synthesis of long-chain linear esters (waxes). The chain is Probable long-chain-alcohol O-fatty-acyltransferase 11 from Arabidopsis thaliana (Mouse-ear cress).